The primary structure comprises 142 residues: MEEVEAEEPQEFSHRQRLKAAVHYTVGCLCQEVTLNKQVNFSKQTIAAISEVTFRQCENFAKDLEMFARHAKRSTVTTEDVKLLARRNNSLLKYITEKNEEIAQLNLKGKAKKKRKPEDESRSSRESMAEELDGAEELQSES.

The segment at 107-142 (LKGKAKKKRKPEDESRSSRESMAEELDGAEELQSES) is disordered. The span at 116–128 (KPEDESRSSRESM) shows a compositional bias: basic and acidic residues. Acidic residues predominate over residues 129 to 142 (AEELDGAEELQSES).

It belongs to the TAF9 family. CENP-S/MHF1 subfamily. In terms of assembly, heterodimer with CENPX, sometimes called MHF; this interaction stabilizes both partners. MHF heterodimers can assemble to form tetrameric structures. MHF also coassemble with CENPT-CENPW heterodimers at centromeres to form the tetrameric CENP-T-W-S-X complex. Forms a discrete complex with FANCM and CENPX, called FANCM-MHF; this interaction, probably mediated by direct binding between CENPS and FANCM, leads to synergistic activation of double-stranded DNA binding and strongly stimulates FANCM-mediated DNA remodeling. Recruited by FANCM to the Fanconi anemia (FA) core complex, which consists of CENPS, CENPX, FANCA, FANCB, FANCC, FANCE, FANCF, FANCG, FANCL, FANCM, FAAP24 and FAAP100. The FA core complex associates with Bloom syndrome (BLM) complex, which consists of at least BLM, DNA topoisomerase 3-alpha (TOP3A), RMI1/BLAP75, RPA1/RPA70 and RPA2/RPA32. The super complex between FA and BLM is called BRAFT. Component of the CENPA-CAD complex, composed of CENPI, CENPK, CENPL, CENPO, CENPP, CENPQ, CENPR and CENPS. The CENPA-CAD complex is probably recruited on centromeres by the CENPA-NAC complex, at least composed of CENPA, CENPC, CENPH, CENPM, CENPN, CENPT and CENPU.

It is found in the nucleus. It localises to the chromosome. The protein resides in the centromere. Its subcellular location is the kinetochore. DNA-binding component of the Fanconi anemia (FA) core complex. Required for the normal activation of the FA pathway, leading to monoubiquitination of the FANCI-FANCD2 complex in response to DNA damage, cellular resistance to DNA cross-linking drugs, and prevention of chromosomal breakage. In complex with CENPX (MHF heterodimer), crucial cofactor for FANCM in both binding and ATP-dependent remodeling of DNA. Stabilizes FANCM. In complex with CENPX and FANCM (but not other FANC proteins), rapidly recruited to blocked forks and promotes gene conversion at blocked replication forks. In complex with CENPT, CENPW and CENPX (CENP-T-W-S-X heterotetramer), involved in the formation of a functional kinetochore outer plate, which is essential for kinetochore-microtubule attachment and faithful mitotic progression. As a component of MHF and CENP-T-W-S-X complexes, binds DNA and bends it to form a nucleosome-like structure. DNA-binding function is fulfilled in the presence of CENPX, with the following preference for DNA substates: Holliday junction &gt; double-stranded &gt; splay arm &gt; single-stranded. Does not bind DNA on its own. This is Centromere protein S (Cenps) from Mus musculus (Mouse).